Reading from the N-terminus, the 927-residue chain is Cell division control protein 15 (927 aa).

The 254-residue stretch at 20-273 folds into the F-BAR domain; it reads VKFRDNFWGS…TLENTNIDED (254 aa). Positions 108 to 207 form a coiled coil; it reads QQINTELRNK…AEYRETNELL (100 aa). A compositionally biased stretch (low complexity) spans 321 to 354; it reads SRPSASASLASSPTRSAFRPKTSETVSSEVVSSP. Disordered regions lie at residues 321-370, 390-409, 423-495, 509-550, and 597-857; these read SRPS…SNEQ, ESQKPVLTGSSMRRPSVTSP, VRSS…TSLG, PTSP…DELE, and SSSM…VDPR. S331 and S332 each carry phosphoserine. Polar residues predominate over residues 397-409; that stretch reads TGSSMRRPSVTSP. The span at 444-461 shows a compositional bias: basic and acidic residues; that stretch reads PEVKEGKNSENAITKDND. Polar residues-rich tracts occupy residues 465–482, 513–546, and 616–625; these read LSSQLQPTATGSRSSRLS, FMGSSFSNMGSRSTSPTKEGFASNQHATGASVQS, and LSKTSSSTRL. Phosphothreonine is present on T529. Phosphoserine occurs at positions 636 and 639. Residues 658–675 are compositionally biased toward polar residues; that stretch reads TSAQMQRMSNSFASQTKQ. Residues 680 to 691 are compositionally biased toward basic and acidic residues; it reads QRTENSARESLR. Over residues 695 to 714 the composition is skewed to low complexity; it reads SNMSRSPSPMLSRRSSTLRP. Position 700 is a phosphoserine (S700). Polar residues-rich tracts occupy residues 718-730 and 739-775; these read RSASSLSVRQSDV and ARGQSVSGQQRPSSSMSLYGEYNKSQPQLSMQRSVSP. Phosphoserine is present on S774. The segment covering 784–813 has biased composition (low complexity); that stretch reads SSSVLQSQKSTSSNTSNRNNGGYSGSRPSS. The span at 823–853 shows a compositional bias: polar residues; it reads SGRSMRQVSQRSTSRARSPEPTNRNSVQSKN. The SH3 domain occupies 866-927; the sequence is PILGYVIALY…LFPSNFVQTV (62 aa).

Its subcellular location is the cytoplasm. The protein resides in the cytoskeleton. Its function is as follows. After the onset of mitosis, forms a ring-like structure which colocalizes with the medial actin ring. Appears to mediate cytoskeletal rearrangements required for cytokinesis. Essential for viability. This is Cell division control protein 15 (cdc15) from Schizosaccharomyces pombe (strain 972 / ATCC 24843) (Fission yeast).